The primary structure comprises 520 residues: T-box transcription factor TBX22 (520 aa).

The disordered stretch occupies residues 1-91; sequence MALSSRARAF…NSSESLEEKD (91 aa). Residues 33–49 show a composition bias toward basic and acidic residues; it reads PELREKKGGEEEEERRS. Over residues 67–84 the composition is skewed to low complexity; that stretch reads STSASSGCGSDSGYGNSS. The T-box DNA-binding region spans 96 to 283; it reads LQGSELWKRF…RNPFAKGFRD (188 aa).

In terms of tissue distribution, seems to be expressed at a low level.

It localises to the nucleus. Its function is as follows. Probable transcriptional regulator involved in developmental processes. This is major determinant crucial to palatogenesis. This Homo sapiens (Human) protein is T-box transcription factor TBX22 (TBX22).